Reading from the N-terminus, the 495-residue chain is Glutamate--tRNA ligase (495 aa).

The short motif at 12–22 (PSPTGHLHIGN) is the 'HIGH' region element. Positions 259-263 (KLSKR) match the 'KMSKS' region motif. ATP is bound at residue Lys-262.

It belongs to the class-I aminoacyl-tRNA synthetase family. Glutamate--tRNA ligase type 1 subfamily. Monomer.

Its subcellular location is the cytoplasm. It catalyses the reaction tRNA(Glu) + L-glutamate + ATP = L-glutamyl-tRNA(Glu) + AMP + diphosphate. Functionally, catalyzes the attachment of glutamate to tRNA(Glu) in a two-step reaction: glutamate is first activated by ATP to form Glu-AMP and then transferred to the acceptor end of tRNA(Glu). This chain is Glutamate--tRNA ligase, found in Pediococcus pentosaceus (strain ATCC 25745 / CCUG 21536 / LMG 10740 / 183-1w).